Reading from the N-terminus, the 232-residue chain is Polycomb group RING finger protein 5-B (232 aa).

The RING-type zinc-finger motif lies at 18–57 (CFVCKGYLIKPTTVTECLHTFCKSCIVQHFEDSNDCPKCG). A compositionally biased stretch (basic and acidic residues) spans 93 to 104 (QEDEFWRRKESN). The tract at residues 93-128 (QEDEFWRRKESNDENGPMCKKRRVDEEDDDKGDGDY) is disordered.

In terms of assembly, component of a PRC1-like complex.

Its subcellular location is the nucleus. Functionally, component of Polycomb group (PcG) multiprotein complexes; the complex class is required to maintain the transcriptionally repressive state of some genes. This is Polycomb group RING finger protein 5-B (pcgf5b) from Danio rerio (Zebrafish).